The sequence spans 347 residues: Quinolinate synthase (347 aa).

The iminosuccinate site is built by H47 and S68. C113 contributes to the [4Fe-4S] cluster binding site. Residues 139-141 (YAN) and S156 each bind iminosuccinate. C200 lines the [4Fe-4S] cluster pocket. Residues 226–228 (HPE) and T243 each bind iminosuccinate. C297 lines the [4Fe-4S] cluster pocket.

This sequence belongs to the quinolinate synthase family. Type 1 subfamily. [4Fe-4S] cluster is required as a cofactor.

Its subcellular location is the cytoplasm. The catalysed reaction is iminosuccinate + dihydroxyacetone phosphate = quinolinate + phosphate + 2 H2O + H(+). It functions in the pathway cofactor biosynthesis; NAD(+) biosynthesis; quinolinate from iminoaspartate: step 1/1. In terms of biological role, catalyzes the condensation of iminoaspartate with dihydroxyacetone phosphate to form quinolinate. This Escherichia coli (strain K12 / MC4100 / BW2952) protein is Quinolinate synthase.